A 479-amino-acid polypeptide reads, in one-letter code: Transcription factor CP2-like protein 1 (479 aa).

Positions 1–52 are mediate transcriptional repression; the sequence is MLFWHTQPEHYNQHNSGSYLRDVLALPIFKQEEPQLSPENGARLPPLQYVLC. The Grh/CP2 DB domain maps to 43-280; sequence RLPPLQYVLC…PSPSYNGSPN (238 aa). 2 disordered regions span residues 219–248 and 260–301; these read KPKGADRKQKTDREKMEKRTAQEKEKYQPS and WPDV…LPLG. Residues 221–245 show a composition bias toward basic and acidic residues; the sequence is KGADRKQKTDREKMEKRTAQEKEKY. Residues 261–365 are SAM2-like domain; the sequence is PDVPYQANNT…IRLFNAIKGR (105 aa). Residues 266–292 are compositionally biased toward polar residues; that stretch reads QANNTPSPSYNGSPNSFGLREGNSSPN.

It belongs to the grh/CP2 family. CP2 subfamily. As to quaternary structure, forms homohexamers via its SAM-like domain. Interacts with Mta1; which is indispensable for Tfcp2l1-mediated self-renewal-promoting effect and endoderm-inhibiting action. In terms of tissue distribution, highly expressed in placenta, testis, small intestine, kidney and stomach. Low levels of expression in lung, mesenteric lymph nodes, muscle, ovary, and thymus. No expression was detected in brain, heart, liver, and spleen. Expressed in eccrine glands in the palm. Expression is prominent in both kidney collecting ducts intercalated (IC) and principal (PC) cells. Also expressed in the thick limb of Henle and connecting segments of the nephron.

It localises to the nucleus. Transcription factor that facilitates establishment and maintenance of pluripotency in embryonic stem cells (ESCs). With Klf2, acts as the major effector of self-renewal that mediates induction of pluripotency downstream of LIF/Stat3 and Wnt/beta-catenin signaling. Required for normal duct development in the salivary gland and kidney. Coordinates the development of the kidney collecting ducts intercalated (IC) and principal (PC) cells, which regulate acid-base and salt-water homeostasis, respectively. Regulates the expression of IC genes including subunits B1 and D2 of the V-ATPase complex, Oxgr1, Ca12, Slc4a1, Aqp6 and IC-specific transcription factor Foxi1. Also regulates the expression of Jag1 and subsequent notch signaling in the collecting duct. Jag1 initiates notch signaling in PCs but inhibits notch signaling in ICs. Acts as a transcriptional suppressor that may suppress UBP1-mediated transcriptional activation. Modulates the placental expression of CYP11A1. This Mus musculus (Mouse) protein is Transcription factor CP2-like protein 1 (Tfcp2l1).